Here is a 737-residue protein sequence, read N- to C-terminus: Polyribonucleotide nucleotidyltransferase (737 aa).

Mg(2+) contacts are provided by Asp489 and Asp495. Residues 556 to 615 enclose the KH domain; the sequence is PKIDTIKIDVDKIKIVIGKGGETIDKIIAETGVKIDIDEEGNVSIYSSDQDAINRAKEII. The region spanning 625 to 693 is the S1 motif domain; that stretch reads DEVYRAKVVR…EKGRIDASMK (69 aa). A disordered region spans residues 691 to 737; the sequence is SMKALLPRPPKPEHDEKGEKSERPHRPRHQKDHKPKKEFTETPKDSE. Basic and acidic residues predominate over residues 700–714; the sequence is PKPEHDEKGEKSERP. Positions 715–724 are enriched in basic residues; the sequence is HRPRHQKDHK. The span at 725–737 shows a compositional bias: basic and acidic residues; that stretch reads PKKEFTETPKDSE.

The protein belongs to the polyribonucleotide nucleotidyltransferase family. Mg(2+) is required as a cofactor.

It localises to the cytoplasm. The enzyme catalyses RNA(n+1) + phosphate = RNA(n) + a ribonucleoside 5'-diphosphate. Involved in mRNA degradation. Catalyzes the phosphorolysis of single-stranded polyribonucleotides processively in the 3'- to 5'-direction. In Streptococcus pneumoniae (strain JJA), this protein is Polyribonucleotide nucleotidyltransferase.